A 675-amino-acid chain; its full sequence is L-type lectin-domain containing receptor kinase IX.2 (675 aa).

Residues 1–35 (MLYFIFCQNLSSSSSMSNSILFLSLFLFLPFVVDS) form the signal peptide. 8 N-linked (GlcNAc...) asparagine glycosylation sites follow: Asn-9, Asn-39, Asn-110, Asn-146, Asn-179, Asn-186, Asn-191, and Asn-212. Positions 36–269 (LYFNFTSFRQ…EEHRLLSWEL (234 aa)) are legume-lectin like. Residues 36-281 (LYFNFTSFRQ…SLDSDKADSR (246 aa)) are Extracellular-facing. Residues 282-302 (IGLVIGISASGFVFLTFMVIT) form a helical membrane-spanning segment. Over 303 to 675 (TVVVWSRKQR…VTFSGIEYGR (373 aa)) the chain is Cytoplasmic. The Protein kinase domain occupies 350-631 (FSSHRKLGEG…KQGIQVMNFE (282 aa)). ATP-binding positions include 356–364 (LGEGGFGAV) and Lys-379. Asp-475 serves as the catalytic Proton acceptor.

It in the C-terminal section; belongs to the protein kinase superfamily. Ser/Thr protein kinase family. In the N-terminal section; belongs to the leguminous lectin family. Interacts with ABCG40.

It is found in the cell membrane. The catalysed reaction is L-seryl-[protein] + ATP = O-phospho-L-seryl-[protein] + ADP + H(+). It carries out the reaction L-threonyl-[protein] + ATP = O-phospho-L-threonyl-[protein] + ADP + H(+). Promotes hydrogen peroxide H(2)O(2) production and cell death. Its function is as follows. Involved in resistance response to the pathogenic oomycetes Phytophthora infestans and Phytophthora capsici. The polypeptide is L-type lectin-domain containing receptor kinase IX.2 (Arabidopsis thaliana (Mouse-ear cress)).